The chain runs to 196 residues: Cell division protein SepF (196 aa).

A disordered region spans residues 15-80 (VEDDEEFNEP…PKRSASTFSK (66 aa)). Over residues 56 to 79 (RPAQSTPKPQAQTAAPKRSASTFS) the composition is skewed to polar residues.

This sequence belongs to the SepF family. Homodimer. Interacts with FtsZ.

It localises to the cytoplasm. In terms of biological role, cell division protein that is part of the divisome complex and is recruited early to the Z-ring. Probably stimulates Z-ring formation, perhaps through the cross-linking of FtsZ protofilaments. Its function overlaps with FtsA. This is Cell division protein SepF from Lactococcus lactis subsp. cremoris (strain SK11).